A 90-amino-acid polypeptide reads, in one-letter code: Cell division topological specificity factor (90 aa).

The protein belongs to the MinE family.

Prevents the cell division inhibition by proteins MinC and MinD at internal division sites while permitting inhibition at polar sites. This ensures cell division at the proper site by restricting the formation of a division septum at the midpoint of the long axis of the cell. This Francisella tularensis subsp. tularensis (strain FSC 198) protein is Cell division topological specificity factor.